Reading from the N-terminus, the 183-residue chain is Large ribosomal subunit protein uL5 (183 aa).

The protein belongs to the universal ribosomal protein uL5 family. As to quaternary structure, part of the 50S ribosomal subunit; contacts the 5S rRNA and probably tRNA. Forms a bridge to the 30S subunit in the 70S ribosome.

In terms of biological role, this is one of the proteins that bind and probably mediate the attachment of the 5S RNA into the large ribosomal subunit, where it forms part of the central protuberance. In the 70S ribosome it contacts protein S13 of the 30S subunit (bridge B1b), connecting the 2 subunits; this bridge is implicated in subunit movement. May contact the P site tRNA; the 5S rRNA and some of its associated proteins might help stabilize positioning of ribosome-bound tRNAs. The protein is Large ribosomal subunit protein uL5 of Thermococcus kodakarensis (strain ATCC BAA-918 / JCM 12380 / KOD1) (Pyrococcus kodakaraensis (strain KOD1)).